Reading from the N-terminus, the 668-residue chain is tRNA 5-methylaminomethyl-2-thiouridine biosynthesis bifunctional protein MnmC (668 aa).

Residues 1–245 (MKHYAIQPAN…KREMLCGVME (245 aa)) form a tRNA (mnm(5)s(2)U34)-methyltransferase region. Residues 270-668 (IGGGIASALL…LLKGKAVKAG (399 aa)) are FAD-dependent cmnm(5)s(2)U34 oxidoreductase.

This sequence in the N-terminal section; belongs to the methyltransferase superfamily. tRNA (mnm(5)s(2)U34)-methyltransferase family. It in the C-terminal section; belongs to the DAO family. Requires FAD as cofactor.

The protein localises to the cytoplasm. It carries out the reaction 5-aminomethyl-2-thiouridine(34) in tRNA + S-adenosyl-L-methionine = 5-methylaminomethyl-2-thiouridine(34) in tRNA + S-adenosyl-L-homocysteine + H(+). Functionally, catalyzes the last two steps in the biosynthesis of 5-methylaminomethyl-2-thiouridine (mnm(5)s(2)U) at the wobble position (U34) in tRNA. Catalyzes the FAD-dependent demodification of cmnm(5)s(2)U34 to nm(5)s(2)U34, followed by the transfer of a methyl group from S-adenosyl-L-methionine to nm(5)s(2)U34, to form mnm(5)s(2)U34. The protein is tRNA 5-methylaminomethyl-2-thiouridine biosynthesis bifunctional protein MnmC of Escherichia coli O139:H28 (strain E24377A / ETEC).